Here is a 688-residue protein sequence, read N- to C-terminus: DNA-directed RNA polymerase subunit beta' (688 aa).

Zn(2+)-binding residues include Cys69, Cys71, Cys87, and Cys90. Asp493, Asp495, and Asp497 together coordinate Mg(2+).

Belongs to the RNA polymerase beta' chain family. RpoC1 subfamily. As to quaternary structure, in plastids the minimal PEP RNA polymerase catalytic core is composed of four subunits: alpha, beta, beta', and beta''. When a (nuclear-encoded) sigma factor is associated with the core the holoenzyme is formed, which can initiate transcription. Mg(2+) serves as cofactor. It depends on Zn(2+) as a cofactor.

The protein localises to the plastid. It localises to the chloroplast. It catalyses the reaction RNA(n) + a ribonucleoside 5'-triphosphate = RNA(n+1) + diphosphate. Its function is as follows. DNA-dependent RNA polymerase catalyzes the transcription of DNA into RNA using the four ribonucleoside triphosphates as substrates. The sequence is that of DNA-directed RNA polymerase subunit beta' from Chloranthus spicatus (Chulantree).